The primary structure comprises 246 residues: MKIYLKFKSYNKRICKLLQLFKLEHDQNCSMGLLINHNSLELYNRDNVNQKPIKVDFTSKKNHYRCHHFRRKNEVLYRVSGIKNSYFPTILDATAGLGNDAFIFSFLGCKVIMIERHPIVAALLKDGLQRGYQDKKIGHWLQTRLHLIVNDSLKMLEIPILQPDVIYLDPMYPFHHKKSLPKKDMQFFRQLIGHNYDSKKLLEVSRKLAKNRIIVKRPYYAKPLSEDKVNHIVTTRNHRFDIYQPF.

Residues 115 to 116 (ER) and Asp169 each bind S-adenosyl-L-methionine.

Belongs to the methyltransferase superfamily. RsmJ family.

The protein localises to the cytoplasm. It carries out the reaction guanosine(1516) in 16S rRNA + S-adenosyl-L-methionine = N(2)-methylguanosine(1516) in 16S rRNA + S-adenosyl-L-homocysteine + H(+). Its function is as follows. Specifically methylates the guanosine in position 1516 of 16S rRNA. The polypeptide is Ribosomal RNA small subunit methyltransferase J (Buchnera aphidicola subsp. Acyrthosiphon pisum (strain APS) (Acyrthosiphon pisum symbiotic bacterium)).